The following is a 566-amino-acid chain: Lamin-1 (566 aa).

Positions Met1–Leu37 are disordered. Ser2 carries the N-acetylserine modification. The segment at Val13–Asp47 is head. Positions Glu45–Leu387 constitute an IF rod domain. Residues His48–Val82 are coil 1A. Positions Val83–Arg94 are linker 1. The coil 1B stretch occupies residues Phe95 to Glu228. A linker 2 region spans residues Leu229–Gln256. The tract at residues Asp257–Glu385 is coil 2. The segment at Arg386 to Met566 is tail. Residues Arg435 to Phe550 form the LTD domain. The tract at residues Gly528–Met566 is disordered. Polar residues predominate over residues Asp541–Pro556. Cys563 is subject to Cysteine methyl ester. Cys563 carries the S-farnesyl cysteine lipid modification. A propeptide spans Ser564 to Met566 (removed in mature form).

It belongs to the intermediate filament family. Interacts with LEM domain proteins lem-2 and emr-1. May interact with unc-84; this interaction may be required to complete the connection between the nuclear lamina and the cytoskeleton. As to expression, ubiquitous. Expressed in all cells, except in cells undergoing spermatogenesis.

The protein localises to the nucleus envelope. It localises to the nucleus inner membrane. Major component of the nuclear lamina, a fibrous layer on the nucleoplasmic side of the inner nuclear membrane. Provides a framework for the nuclear envelope and probably also interacts with chromatin. Essential to maintain the shape and integrity of the nucleus, and for DNA replication. Involved in spatial organization of nuclear pore complexes. It is not a target for ced-3 during apoptosis, suggesting that lamin cleavage is not essential for apoptosis in C.elegans. The chain is Lamin-1 from Caenorhabditis elegans.